The chain runs to 1069 residues: Calcium-transporting ATPase 10, plasma membrane-type (1069 aa).

The segment at 1–29 (MSGQFNNSPRGEDKDVEAGTSSFTEYEDS) is disordered. The residue at position 2 (Ser-2) is an N-acetylserine. Over 2 to 180 (SGQFNNSPRG…NTYPQKKGRS (179 aa)) the chain is Cytoplasmic. The interaction with calmodulin stretch occupies residues 42–53 (ERLRRWRQAALV). A helical membrane pass occupies residues 181-201 (FWRFVWEASQDLTLIILIVAA). Residues 202–219 (VASLALGIKTEGIEKGWY) are Lumenal-facing. The chain crosses the membrane as a helical span at residues 220 to 240 (DGISIAFAVLLVIVVTATSDY). At 241-369 (RQSLQFQNLN…GGETPLQVRL (129 aa)) the chain is on the cytoplasmic side. The helical transmembrane segment at 370–389 (NGVATFIGIVGLTVAGVVLF) threads the bilayer. The Lumenal segment spans residues 390-426 (VLVVRYFTGHTKNEQGGPQFIGGKTKFEHVLDDLVEI). Residues 427-444 (FTVAVTIVVVAVPEGLPL) traverse the membrane as a helical segment. Over 445-844 (AVTLTLAYSM…RWGRSVYANI (400 aa)) the chain is Cytoplasmic. The 4-aspartylphosphate intermediate role is filled by Asp-482. The Mg(2+) site is built by Asp-789 and Asp-793. Residues 845–863 (QKFIQFQLTVNVAALVINV) form a helical membrane-spanning segment. Over 864 to 874 (VAAISAGEVPL) the chain is Lumenal. A helical transmembrane segment spans residues 875–895 (TAVQLLWVNLIMDTLGALALA). Over 896–915 (TEPPTDHLMDRAPVGRREPL) the chain is Cytoplasmic. Residues 916–938 (ITNIMWRNLFIQAMYQVTVLLIL) form a helical membrane-spanning segment. At 939–951 (NFRGISILHLKSK) the chain is on the lumenal side. Residues 952–973 (PNAERVKNTVIFNAFVICQVFN) traverse the membrane as a helical segment. The Cytoplasmic segment spans residues 974–991 (EFNARKPDEINIFRGVLR). A helical membrane pass occupies residues 992–1013 (NHLFVGIISITIVLQVVIVEFL). The Lumenal portion of the chain corresponds to 1014–1023 (GTFASTTKLD). A helical membrane pass occupies residues 1024-1045 (WEMWLVCIGIGSISWPLAVIGK). Residues 1046 to 1069 (LIPVPETPVSQYFRINRWRRNSSG) are Cytoplasmic-facing.

The protein belongs to the cation transport ATPase (P-type) (TC 3.A.3) family. Type IIB subfamily.

The protein localises to the membrane. It carries out the reaction Ca(2+)(in) + ATP + H2O = Ca(2+)(out) + ADP + phosphate + H(+). Its activity is regulated as follows. Activated by calmodulin. In terms of biological role, this magnesium-dependent enzyme catalyzes the hydrolysis of ATP coupled with the translocation of calcium from the cytosol into the endoplasmic reticulum. The polypeptide is Calcium-transporting ATPase 10, plasma membrane-type (ACA10) (Arabidopsis thaliana (Mouse-ear cress)).